A 338-amino-acid chain; its full sequence is Taste receptor type 2 member 39 (338 aa).

At 1 to 30 the chain is on the extracellular side; that stretch reads MLGRCFPPDTKEKQQLRMTKLCDPAESELS. The chain crosses the membrane as a helical span at residues 31–51; sequence PFLITLILAVLLAEYLIGIIA. The Cytoplasmic portion of the chain corresponds to 52–74; it reads NGFIMAIHAAEWVQNKAVSTSGR. Residues 75-95 form a helical membrane-spanning segment; sequence ILVFLSVSRIALQSLMMLEIT. The Extracellular segment spans residues 96–116; it reads ISSTSLSFYSEDAVYYAFKIS. The chain crosses the membrane as a helical span at residues 117–137; sequence FIFLNFCSLWFAAWLSFFYFV. At 138–156 the chain is on the cytoplasmic side; that stretch reads KIANFSYPLFLKLRWRITG. A helical membrane pass occupies residues 157–177; sequence LIPWLLWLSVFISFSHSMFCI. Residues 178–205 are Extracellular-facing; it reads NICTVYCNNSFPIHSSNSTKKTYLSEIN. N-linked (GlcNAc...) asparagine glycans are attached at residues Asn-185 and Asn-194. A helical membrane pass occupies residues 206-226; sequence VVGLAFFFNLGIVTPLIMFIL. Residues 227–262 are Cytoplasmic-facing; the sequence is TATLLILSLKRHTLHMGSNATGSNDPSMEAHMGAIK. Residues 263-283 traverse the membrane as a helical segment; that stretch reads AISYFLILYIFNAVALFIYLS. Residues 284-291 lie on the Extracellular side of the membrane; sequence NMFDINSL. The helical transmembrane segment at 292–312 threads the bilayer; it reads WNNLCQIIMAAYPASHSILLI. Topologically, residues 313-338 are cytoplasmic; sequence QDNPGLRRAWKRLQLRLHLYPKEWTL.

This sequence belongs to the G-protein coupled receptor T2R family. As to expression, expressed in subsets of taste receptor cells of the tongue and exclusively in gustducin-positive cells.

The protein localises to the membrane. In terms of biological role, receptor that may play a role in the perception of bitterness and is gustducin-linked. May play a role in sensing the chemical composition of the gastrointestinal content. The activity of this receptor may stimulate alpha gustducin, mediate PLC-beta-2 activation and lead to the gating of TRPM5. The polypeptide is Taste receptor type 2 member 39 (TAS2R39) (Homo sapiens (Human)).